The following is a 365-amino-acid chain: Ferrochelatase (365 aa).

Fe cation-binding residues include His-211 and Glu-292.

The protein belongs to the ferrochelatase family.

The protein resides in the cytoplasm. It catalyses the reaction heme b + 2 H(+) = protoporphyrin IX + Fe(2+). It functions in the pathway porphyrin-containing compound metabolism; protoheme biosynthesis; protoheme from protoporphyrin-IX: step 1/1. In terms of biological role, catalyzes the ferrous insertion into protoporphyrin IX. In Aromatoleum aromaticum (strain DSM 19018 / LMG 30748 / EbN1) (Azoarcus sp. (strain EbN1)), this protein is Ferrochelatase.